A 497-amino-acid polypeptide reads, in one-letter code: Glycerol kinase (497 aa).

Residue Thr12 coordinates ADP. Thr12, Thr13, and Ser14 together coordinate ATP. Thr12 provides a ligand contact to sn-glycerol 3-phosphate. Arg16 is an ADP binding site. Sn-glycerol 3-phosphate contacts are provided by Arg82, Glu83, Tyr132, and Asp239. The glycerol site is built by Arg82, Glu83, Tyr132, Asp239, and Gln240. ADP contacts are provided by Thr261 and Gly303. ATP is bound by residues Thr261, Gly303, Gln307, and Gly402. ADP is bound by residues Gly402 and Asn406.

Belongs to the FGGY kinase family. As to quaternary structure, homodimer.

The enzyme catalyses glycerol + ATP = sn-glycerol 3-phosphate + ADP + H(+). The protein operates within polyol metabolism; glycerol degradation via glycerol kinase pathway; sn-glycerol 3-phosphate from glycerol: step 1/1. Its function is as follows. Key enzyme in the regulation of glycerol uptake and metabolism. Catalyzes the phosphorylation of glycerol to yield sn-glycerol 3-phosphate. Can utilize other nucleoside triphosphates (GTP, CTP, UTP and ITP) as a phosphoryl donor. The protein is Glycerol kinase of Thermococcus kodakarensis (strain ATCC BAA-918 / JCM 12380 / KOD1) (Pyrococcus kodakaraensis (strain KOD1)).